Reading from the N-terminus, the 96-residue chain is uncharacterized protein (96 aa).

A signal peptide spans 1–15 (MRLFILLVALFVICA).

This is an uncharacterized protein from Caenorhabditis elegans.